The following is a 283-amino-acid chain: Extensin (283 aa).

An N-terminal signal peptide occupies residues 1-24; sequence MMGGKAALLLALVAVTLAVVEIQA. The segment at 27–283 is disordered; the sequence is GYGYGGGYPT…PPPPPPPPYY (257 aa). A compositionally biased stretch (pro residues) spans 36–45; the sequence is TPTPKPPAKG. Residues 46–69 are compositionally biased toward basic and acidic residues; it reads PKPEKPPTKGHGHKPEKPPKEHKP. Pro residues-rich tracts occupy residues 70-264 and 272-283; these read TPPT…PTYT and SSPPPPPPPPYY.

Post-translationally, hydroxylated on proline residues in the S-P-P-P-P repeat. In terms of processing, O-glycosylated on hydroxyprolines.

Its subcellular location is the secreted. The protein resides in the primary cell wall. In terms of biological role, structural component in primary cell wall. The sequence is that of Extensin (HRGP) from Sorghum bicolor (Sorghum).